The primary structure comprises 241 residues: Probable transcriptional regulatory protein LMOf2365_1554 (241 aa).

Positions 1–14 (MSGHSKWNNIQGRK) are enriched in polar residues. The segment at 1–22 (MSGHSKWNNIQGRKNAQDSKRS) is disordered.

Belongs to the TACO1 family.

The protein localises to the cytoplasm. The polypeptide is Probable transcriptional regulatory protein LMOf2365_1554 (Listeria monocytogenes serotype 4b (strain F2365)).